A 307-amino-acid chain; its full sequence is MASQQHSVPCISRSPPEQPLQVKVVGLFKSSSFQIAKSAAESLKSNYPSNFEDPIIIPVQEFAWHQYLQEKKRELKNEVWEYSSYVMCFINDKLLGDALDLQKWAHKVWDIVDFKPPALYEALTVDYSAKFLRDTKHNFVFLDISIDLYPIGRLIFELYSDTCPKTCKNFQILCTGKAGFSQSGIKLHYTGSIFHRVVRNGWVQGGDIVAGKGDNGESIYGPTFEDENFSVPHNKRGVLGMVNKGRHSNGSQFYITLQAAPYLDKKYVAFGQLIEGTDVLHHLESVPTENERPIQNCVITASGQLYA.

The 164-residue stretch at 141-304 (FLDISIDLYP…QNCVITASGQ (164 aa)) folds into the PPIase cyclophilin-type domain.

This sequence belongs to the cyclophilin-type PPIase family.

In terms of biological role, probable inactive PPIase with no peptidyl-prolyl cis-trans isomerase activity. This Bos taurus (Bovine) protein is Probable inactive peptidyl-prolyl cis-trans isomerase-like 6.